Reading from the N-terminus, the 493-residue chain is ATP synthase subunit beta, chloroplastic (493 aa).

An ATP-binding site is contributed by 170 to 177; it reads GGAGVGKT.

It belongs to the ATPase alpha/beta chains family. In terms of assembly, F-type ATPases have 2 components, CF(1) - the catalytic core - and CF(0) - the membrane proton channel. CF(1) has five subunits: alpha(3), beta(3), gamma(1), delta(1), epsilon(1). CF(0) has four main subunits: a(1), b(1), b'(1) and c(9-12).

It localises to the plastid. The protein resides in the chloroplast thylakoid membrane. The catalysed reaction is ATP + H2O + 4 H(+)(in) = ADP + phosphate + 5 H(+)(out). Its function is as follows. Produces ATP from ADP in the presence of a proton gradient across the membrane. The catalytic sites are hosted primarily by the beta subunits. This is ATP synthase subunit beta, chloroplastic from Adiantum capillus-veneris (Maidenhair fern).